A 343-amino-acid polypeptide reads, in one-letter code: Glucokinase (343 aa).

18-23 (GDIGGT) contacts ATP.

The protein belongs to the bacterial glucokinase family.

The protein localises to the cytoplasm. It catalyses the reaction D-glucose + ATP = D-glucose 6-phosphate + ADP + H(+). In Brucella abortus (strain 2308), this protein is Glucokinase.